The chain runs to 447 residues: Argininosuccinate lyase (447 aa).

The protein belongs to the lyase 1 family. Argininosuccinate lyase subfamily.

The protein localises to the cytoplasm. The catalysed reaction is 2-(N(omega)-L-arginino)succinate = fumarate + L-arginine. It participates in amino-acid biosynthesis; L-arginine biosynthesis; L-arginine from L-ornithine and carbamoyl phosphate: step 3/3. The chain is Argininosuccinate lyase from Sulfolobus acidocaldarius (strain ATCC 33909 / DSM 639 / JCM 8929 / NBRC 15157 / NCIMB 11770).